Consider the following 238-residue polypeptide: Survival of motor neuron-related-splicing factor 30 (238 aa).

A Tudor domain is found at Ser72–Lys132. The Nuclear localization signal motif lies at Lys142–Lys160.

It belongs to the SMN family. In terms of assembly, associates with spliceosomes.

Its subcellular location is the nucleus speckle. It localises to the nucleus. The protein resides in the cajal body. Involved in spliceosome assembly. The polypeptide is Survival of motor neuron-related-splicing factor 30 (smndc1) (Xenopus tropicalis (Western clawed frog)).